A 95-amino-acid chain; its full sequence is Large ribosomal subunit protein bL21 (95 aa).

It belongs to the bacterial ribosomal protein bL21 family. In terms of assembly, part of the 50S ribosomal subunit. Contacts protein L20.

Its function is as follows. This protein binds to 23S rRNA in the presence of protein L20. The chain is Large ribosomal subunit protein bL21 from Prosthecochloris vibrioformis (Chlorobium vibrioforme).